The sequence spans 420 residues: DNA repair protein NreA (420 aa).

Positions 413 to 420 (QTDIFDFA) match the PIP motif motif.

Belongs to the Nre family. In terms of assembly, interacts with the DNA polymerase sliding clamp (PCNA) via the PIP (PCNA-interacting peptide) motif.

In terms of biological role, involved in DNA damage repair. Works together with the UvrABC proteins in repairing DNA damage resulting from exposure to the DNA damaging agent mitomycin C (MMC). In Haloferax volcanii (strain ATCC 29605 / DSM 3757 / JCM 8879 / NBRC 14742 / NCIMB 2012 / VKM B-1768 / DS2) (Halobacterium volcanii), this protein is DNA repair protein NreA.